The primary structure comprises 308 residues: Polyprenyl-phosphate transporter (308 aa).

The next 8 helical transmembrane spans lie at 15–35, 69–89, 91–111, 130–150, 163–183, 200–220, 228–248, and 282–302; these read GLAMGAADVVPGVSGGTIAFI, INGLFLITLFGGIFTSIATLA, LISWLLVTHPIPIWSFFFGLI, LLWLIAGAIFAYGITVLKPLH, AIAICAMILPGISGSFILLLI, ILLIFLTGCVIGLLSFSHILS, DVTLTFLTGLMLGTLPKIWPW, and PSQWLLALVLMLAAVALVLGL.

Belongs to the PopT family.

The protein localises to the cell inner membrane. With respect to regulation, active in alkaline conditions. In terms of biological role, flippase that catalyzes the transport of undecaprenyl phosphate (UndP) across the cytoplasmic membrane, from the external side to the cytoplasmic side. Is involved in UndP recycling during peptidoglycan synthesis. Required for cell shape maintenance at alkaline pH and peptidoglycan maintenance. Required by the cholera pathogen for growth and cell shape maintenance in the intestine. In Vibrio cholerae serotype O1 (strain ATCC 39315 / El Tor Inaba N16961), this protein is Polyprenyl-phosphate transporter.